The chain runs to 561 residues: Nucleoprotein (561 aa).

The binding site for the cap structure m7GTP stretch occupies residues 53 to 237 (MRKDKRSEAD…ITQEPAQINI (185 aa)). Residues Asp-380 and Glu-382 each contribute to the Mn(2+) site. Residues Glu-390, Cys-497, His-500, and Cys-521 each coordinate Zn(2+). Residue Asp-525 coordinates Mn(2+).

The protein belongs to the arenaviridae nucleocapsid protein family. Homomultimerizes to form the nucleocapsid. Binds to viral genomic RNA. Interacts with glycoprotein G2. Interacts with protein Z; this interaction probably directs the encapsidated genome to budding sites. Interacts with protein L; this interaction does not interfere with Z-L interaction. Interacts with host IKBKE (via Protein kinase domain); the interaction inhibits IKBKE kinase activity.

The protein resides in the virion. The protein localises to the host cytoplasm. Encapsidates the genome, protecting it from nucleases. The encapsidated genomic RNA is termed the nucleocapsid (NC). Serves as template for viral transcription and replication. The increased presence of protein N in host cell does not seem to trigger the switch from transcription to replication as observed in other negative strain RNA viruses. Through the interaction with host IKBKE, strongly inhibits the phosphorylation and nuclear translocation of host IRF3, a protein involved in interferon activation pathway, leading to the inhibition of interferon-beta and IRF3-dependent promoters activation. Also encodes a functional 3'-5' exoribonuclease that degrades preferentially dsRNA substrates and thereby participates in the suppression of interferon induction. The protein is Nucleoprotein of Allpahuayo mammarenavirus (isolate Rat/Peru/CLHP-2472/1997) (ALLV).